We begin with the raw amino-acid sequence, 501 residues long: Solute carrier family 2, facilitated glucose transporter member 5 (501 aa).

M1 is subject to N-acetylmethionine. Residues 1 to 18 lie on the Cytoplasmic side of the membrane; that stretch reads MEPQDPVKREGRLTPVIV. Residues 19-39 form a helical membrane-spanning segment; sequence LATLIAAFGSSFQYGYNVAAI. Y32 contacts D-fructose. The Extracellular segment spans residues 40–68; that stretch reads NSPSEFMKDFYNYTYYDRVGEYMNEFYLT. N51 carries N-linked (GlcNAc...) asparagine glycosylation. The helical transmembrane segment at 69-91 threads the bilayer; sequence LLWSVTVSMFPFGGFLGSLMVGP. At 92-98 the chain is on the cytoplasmic side; the sequence is LVNNLGR. Residues 99 to 119 traverse the membrane as a helical segment; sequence KGTLLFNNIFSIVPALLMGFS. The Extracellular segment spans residues 120-126; the sequence is ELAKSFE. The helical transmembrane segment at 127 to 149 threads the bilayer; the sequence is MIIVARVLVGICAGLSSNVVPMY. Residues 150–161 lie on the Cytoplasmic side of the membrane; that stretch reads LGELAPKNWRGA. A helical transmembrane segment spans residues 162 to 182; that stretch reads LGVVPQLFITIGILVAQIFGL. Residue Q167 coordinates D-fructose. Over 183–192 the chain is Extracellular; the sequence is RSLLANEEGW. A helical membrane pass occupies residues 193-213; that stretch reads PILLGLTGIPAVLQLLFLPFF. Residues 214 to 277 lie on the Cytoplasmic side of the membrane; the sequence is PESPRYLLIQ…LFKMRSLRWQ (64 aa). The helical transmembrane segment at 278–298 threads the bilayer; it reads VISIIVLMAGQQLSGVNAIYY. D-fructose is bound by residues Q288 and 296-298; that span reads IYY. Residues 299–313 are Extracellular-facing; sequence YADQIYLSAGVNEDD. A helical transmembrane segment spans residues 314–334; sequence VQYVTAGTGAVNVLITVCAIF. Over 335 to 342 the chain is Cytoplasmic; that stretch reads VVELMGRR. Residues 343–363 form a helical membrane-spanning segment; sequence FLLLLGFSVCFTACCVLTGAL. Residues 364–371 lie on the Extracellular side of the membrane; it reads ALQDVISW. A helical transmembrane segment spans residues 372–394; that stretch reads MPYVSIACVISYVIGHALGPSPI. Residue H387 coordinates D-fructose. The Cytoplasmic segment spans residues 395–412; sequence PALLVTEIFLQSSRPAAY. The helical transmembrane segment at 413-433 threads the bilayer; the sequence is MVAGTVHWLSNFTVGLVFPFI. D-fructose is bound at residue 419–420; that stretch reads HW. Topologically, residues 434–439 are extracellular; that stretch reads QVGLGA. Residues 440–460 form a helical membrane-spanning segment; sequence YSFVIFAVICLLTTVYIFLII. Residues 461 to 501 lie on the Cytoplasmic side of the membrane; the sequence is PETKSKTFIEINRIFIKMNKVPGVHPEKEELKEFPPSTARQ.

The protein belongs to the major facilitator superfamily. Sugar transporter (TC 2.A.1.1) family. Glucose transporter subfamily.

Its subcellular location is the apical cell membrane. It is found in the cell membrane. The protein localises to the sarcolemma. The enzyme catalyses D-fructose(out) = D-fructose(in). Its function is as follows. Functions as a fructose transporter that has only low activity with other monosaccharides. Can mediate the uptake of deoxyglucose, but with low efficiency. Essential for fructose uptake in the small intestine. Plays a role in the regulation of salt uptake and blood pressure in response to dietary fructose. Required for the development of high blood pressure in response to high dietary fructose intake. This chain is Solute carrier family 2, facilitated glucose transporter member 5, found in Bos taurus (Bovine).